The primary structure comprises 284 residues: Avenin-like b9 (284 aa).

The signal sequence occupies residues 1–18 (MKVFILALLALAATTAIA).

This sequence belongs to the prolamin family. In terms of processing, contains disulfide bonds.

In terms of biological role, seed storage protein. Might be integrated via inter-chain disulfide bonds within the glutenin polymer. This Triticum aestivum (Wheat) protein is Avenin-like b9.